A 358-amino-acid chain; its full sequence is cAMP-dependent protein kinase catalytic subunit PRKX (358 aa).

At M1 the chain carries N-acetylmethionine. Positions 1–34 (MEAPGLAQAAAAESDSRKVAEETPDGAPALCPSP) are disordered. In terms of domain architecture, Protein kinase spans 49–303 (FDTLATVGTG…ANDVKHHRWF (255 aa)). ATP-binding positions include 55–63 (VGTGTFGRV) and K78. The Proton acceptor role is filled by D172. T203 is subject to Phosphothreonine. An AGC-kinase C-terminal domain is found at 304–358 (RSVDWEAVPQRKLKPPIVPKIAGDGDTSNFETYPENDWDTAAPVPQKDLEIFKNF).

It belongs to the protein kinase superfamily. AGC Ser/Thr protein kinase family. cAMP subfamily. As to quaternary structure, like other cAMP-dependent protein kinases, the inactive holoenzyme is probably composed of 2 PRKX catalytic subunits and a dimer of regulatory subunits. Interacts (cAMP-dependent) specifically with the regulatory subunits PRKAR1A and PRKAR1B. Compared to other cAMP-dependent serine/threonine protein kinases, does not interact with the 2 other PKA regulatory subunits PRKAR2A and PRKAR2B. Interacts with cAMP-dependent protein kinase inhibitor/PKI proteins; inhibits PRKX. Interacts with GPKOW. Interacts with SMAD6. Interacts with PKD1; involved in differentiation and controlled morphogenesis of the kidney. Interacts with PIN1 (via WW domain). In terms of processing, phosphorylated; autophosphorylates in vitro. Widely expressed (at protein level). Specifically expressed in blood by macrophages and granulocytes according to PubMed:9860982.

The protein resides in the cytoplasm. The protein localises to the nucleus. It catalyses the reaction L-seryl-[protein] + ATP = O-phospho-L-seryl-[protein] + ADP + H(+). The enzyme catalyses L-threonyl-[protein] + ATP = O-phospho-L-threonyl-[protein] + ADP + H(+). With respect to regulation, binding of cAMP to the PRKAR1A or PRKAR1B regulatory subunits induces dissociation of the holoenzyme heterotetramer. The released monomeric PRKX is then active and able to phosphorylate its substrates. Functionally, serine/threonine protein kinase regulated by and mediating cAMP signaling in cells. Acts through phosphorylation of downstream targets that may include CREB, SMAD6 and PKD1 and has multiple functions in cellular differentiation and epithelial morphogenesis. Regulates myeloid cell differentiation through SMAD6 phosphorylation. Involved in nephrogenesis by stimulating renal epithelial cell migration and tubulogenesis. Also involved in angiogenesis through stimulation of endothelial cell proliferation, migration and vascular-like structure formation. The polypeptide is cAMP-dependent protein kinase catalytic subunit PRKX (PRKX) (Homo sapiens (Human)).